The sequence spans 157 residues: Small ribosomal subunit protein uS7 (157 aa).

Belongs to the universal ribosomal protein uS7 family. Part of the 30S ribosomal subunit. Contacts proteins S9 and S11.

Functionally, one of the primary rRNA binding proteins, it binds directly to 16S rRNA where it nucleates assembly of the head domain of the 30S subunit. Is located at the subunit interface close to the decoding center, probably blocks exit of the E-site tRNA. The polypeptide is Small ribosomal subunit protein uS7 (Caulobacter sp. (strain K31)).